We begin with the raw amino-acid sequence, 98 residues long: Protein S100-A13 (98 aa).

An EF-hand domain is found at 18 to 53 (STFFTFAGREGRKGSLNINEFKELATQQLPHLLKDV). Ca(2+) contacts are provided by S32, E37, D64, N66, D68, E70, and E75. The residue at position 32 (S32) is a Phosphoserine.

The protein belongs to the S-100 family. Homodimer. Part of a copper-dependent multiprotein complex containing S100A13, FGF1 and SYT1. Interacts with FGF1 and SYT1. Interacts with IL1A.

Its subcellular location is the cytoplasm. The protein localises to the secreted. Plays a role in the export of proteins that lack a signal peptide and are secreted by an alternative pathway. Binds two calcium ions per subunit. Binds one copper ion. Binding of one copper ion does not interfere with calcium binding. Required for the copper-dependent stress-induced export of IL1A and FGF1. The calcium-free protein binds to lipid vesicles containing phosphatidylserine, but not to vesicles containing phosphatidylcholine. This Mus musculus (Mouse) protein is Protein S100-A13 (S100a13).